Consider the following 147-residue polypeptide: Hemoglobin subunit delta (147 aa).

Residues 3–147 enclose the Globin domain; that stretch reads HLTPEEKALV…VANALAHKYH (145 aa). Ser51 is modified (phosphoserine). Heme b contacts are provided by His64 and His93.

It belongs to the globin family. Heterotetramer of two delta chains and two alpha chains. As to expression, red blood cells.

This is Hemoglobin subunit delta (HBD) from Trichechus manatus (Caribbean manatee).